Here is a 61-residue protein sequence, read N- to C-terminus: Small ribosomal subunit protein uS14 (61 aa).

Zn(2+) contacts are provided by C24, C27, C40, and C43.

The protein belongs to the universal ribosomal protein uS14 family. Zinc-binding uS14 subfamily. As to quaternary structure, part of the 30S ribosomal subunit. Contacts proteins S3 and S10. The cofactor is Zn(2+).

In terms of biological role, binds 16S rRNA, required for the assembly of 30S particles and may also be responsible for determining the conformation of the 16S rRNA at the A site. The chain is Small ribosomal subunit protein uS14 from Beutenbergia cavernae (strain ATCC BAA-8 / DSM 12333 / CCUG 43141 / JCM 11478 / NBRC 16432 / NCIMB 13614 / HKI 0122).